The primary structure comprises 2485 residues: Probable polyketide synthase 10 (2485 aa).

The Ketosynthase family 3 (KS3) domain occupies 8–447 (EDDIAIIGVG…GANCCIILSE (440 aa)). Catalysis depends on for beta-ketoacyl synthase activity residues Cys184, His325, and His363. The tract at residues 636-669 (GIEASFIVGHSLGEISAAHCSGMIDLETLCYIIY) is acyl/malonyl transferase. The active-site For acyl/malonyl transferase activity is the Ser646. An N-terminal hotdog fold region spans residues 930–1054 (PPITILGNES…GNFHISNNLF (125 aa)). A PKS/mFAS DH domain is found at 930 to 1220 (PPITILGNES…SKSLTPIQDP (291 aa)). His964 serves as the catalytic Proton acceptor; for dehydratase activity. The segment at 1071–1220 (NYSLIERDDL…SKSLTPIQDP (150 aa)) is C-terminal hotdog fold. The Proton donor; for dehydratase activity role is filled by Asp1134. A Carrier domain is found at 2410-2485 (ESNKGIDGLL…NQLIKFLNKK (76 aa)). Ser2447 is subject to O-(pantetheine 4'-phosphoryl)serine.

Requires pantetheine 4'-phosphate as cofactor.

Its function is as follows. Probable polyketide synthase. The protein is Probable polyketide synthase 10 (pks10) of Dictyostelium discoideum (Social amoeba).